A 1234-amino-acid polypeptide reads, in one-letter code: DNA-directed RNA polymerase subunit beta (1234 aa).

Residues 1187 to 1234 form a disordered region; the sequence is GREDAPPEEVYEEEYEEEPEELPEDIDFEPDNFDIDSEDLFMDDDYDG. Over residues 1192–1234 the composition is skewed to acidic residues; that stretch reads PPEEVYEEEYEEEPEELPEDIDFEPDNFDIDSEDLFMDDDYDG.

It belongs to the RNA polymerase beta chain family. As to quaternary structure, the RNAP catalytic core consists of 2 alpha, 1 beta, 1 beta' and 1 omega subunit. When a sigma factor is associated with the core the holoenzyme is formed, which can initiate transcription.

The enzyme catalyses RNA(n) + a ribonucleoside 5'-triphosphate = RNA(n+1) + diphosphate. In terms of biological role, DNA-dependent RNA polymerase catalyzes the transcription of DNA into RNA using the four ribonucleoside triphosphates as substrates. The chain is DNA-directed RNA polymerase subunit beta from Caldanaerobacter subterraneus subsp. tengcongensis (strain DSM 15242 / JCM 11007 / NBRC 100824 / MB4) (Thermoanaerobacter tengcongensis).